The chain runs to 599 residues: Sulfite reductase [NADPH] flavoprotein alpha-component (599 aa).

Residues 64–202 enclose the Flavodoxin-like domain; it reads VTLISASQTG…AASEWRARVV (139 aa). Residues 70 to 75, 117 to 120, and 153 to 162 contribute to the FMN site; these read SQTGNA, STQG, and LGDTSYEFFC. An FAD-binding FR-type domain is found at 234–448; the sequence is DAPLTATLSV…IEHNDNFRLP (215 aa). Residues T322, A356, 386–389, 404–406, Y410, and 419–422 each bind FAD; these read RLYS, TVG, and GGAS. Residues 519-520, 525-529, and D561 contribute to the NADP(+) site; these read SR and KIYVQ. Y599 contacts FAD.

The protein belongs to the NADPH-dependent sulphite reductase flavoprotein subunit CysJ family. It in the N-terminal section; belongs to the flavodoxin family. In the C-terminal section; belongs to the flavoprotein pyridine nucleotide cytochrome reductase family. Alpha(8)-beta(8). The alpha component is a flavoprotein, the beta component is a hemoprotein. FAD serves as cofactor. Requires FMN as cofactor.

It catalyses the reaction hydrogen sulfide + 3 NADP(+) + 3 H2O = sulfite + 3 NADPH + 4 H(+). It functions in the pathway sulfur metabolism; hydrogen sulfide biosynthesis; hydrogen sulfide from sulfite (NADPH route): step 1/1. Its function is as follows. Component of the sulfite reductase complex that catalyzes the 6-electron reduction of sulfite to sulfide. This is one of several activities required for the biosynthesis of L-cysteine from sulfate. The flavoprotein component catalyzes the electron flow from NADPH -&gt; FAD -&gt; FMN to the hemoprotein component. This chain is Sulfite reductase [NADPH] flavoprotein alpha-component, found in Salmonella paratyphi A (strain ATCC 9150 / SARB42).